The chain runs to 836 residues: Protein translocase subunit SecA (836 aa).

ATP-binding positions include Gln-85, 103–107 (GEGKT), and Asp-492. A disordered region spans residues 786–817 (REQVAKETSTNQGGDDTLKKQPIKKEPKIGRN). A compositionally biased stretch (basic and acidic residues) spans 801-816 (DTLKKQPIKKEPKIGR). Residues Cys-820, Cys-822, Cys-831, and Cys-832 each contribute to the Zn(2+) site.

It belongs to the SecA family. In terms of assembly, monomer and homodimer. Part of the essential Sec protein translocation apparatus which comprises SecA, SecYEG and auxiliary proteins SecDF. Other proteins may also be involved. Zn(2+) serves as cofactor.

Its subcellular location is the cell membrane. The protein resides in the cytoplasm. It catalyses the reaction ATP + H2O + cellular proteinSide 1 = ADP + phosphate + cellular proteinSide 2.. Part of the Sec protein translocase complex. Interacts with the SecYEG preprotein conducting channel. Has a central role in coupling the hydrolysis of ATP to the transfer of proteins into and across the cell membrane, serving as an ATP-driven molecular motor driving the stepwise translocation of polypeptide chains across the membrane. In Clostridium tetani (strain Massachusetts / E88), this protein is Protein translocase subunit SecA.